The chain runs to 747 residues: Small G protein signaling modulator 3 (747 aa).

Positions 111 to 302 (GVPHSMRPQL…RLWDLFFYEG (192 aa)) constitute a Rab-GAP TBC domain. The residue at position 403 (serine 403) is a Phosphoserine. Residues 412–435 (EDDLEAMKAKNIKQTELVADLREA) adopt a coiled-coil conformation. The 60-residue stretch at 477–536 (GHPRRAKALLDFERHDDDELGFRKNDIITIVSQKDEHCWVGELNGLRGWFPAKFVEVLDE) folds into the SH3 domain. Positions 552–715 (GVTDLVRGTL…FAFSLSQDWE (164 aa)) constitute an RUN domain.

Belongs to the small G protein signaling modulator family. As to quaternary structure, interacts with GJA1. Interaction with GJA1 induces its degradation. Interacts via its RUN domain with the C-terminal region of NF2. Interacts with RAB3A, RAB4A, RAB5A, RAB8A, RAB11A, RAP1A, RAP1B, RAP2A, RAP2B and PDCD6I. No interaction with RAB27A.

The protein localises to the cytoplasm. Its function is as follows. May play a cooperative role in NF2-mediated growth suppression of cells. This is Small G protein signaling modulator 3 from Bos taurus (Bovine).